Reading from the N-terminus, the 508-residue chain is Protein NODULATION SIGNALING PATHWAY 2 (508 aa).

The disordered stretch occupies residues 75-98; that stretch reads ITTTTTTTTTTDEEEEEMETTTTT. In terms of domain architecture, GRAS spans 108–500; the sequence is VGDDSKGLKL…RRLLSASLWT (393 aa). The leucine repeat I (LRI) stretch occupies residues 115 to 190; that stretch reads LKLVHLLMAG…NNHHHHNNNK (76 aa). The VHIID stretch occupies residues 209 to 273; that stretch reads FQLLQDMSPY…NNGPHLRITA (65 aa). The VHIID motif lies at 240–244; the sequence is VHVID. The segment at 289–321 is leucine repeat II (LRII); that stretch reads ETGRRLTSFAASLGQPFSFHHCRLDSDETFRPS. The interval 331 to 422 is PFYRE; sequence LVFNCMLNLP…RVFFGPRIAG (92 aa). The tract at residues 425–500 is SAW; it reads GRIYRTGGEE…RRLLSASLWT (76 aa).

Belongs to the GRAS family. In terms of assembly, interacts with RAM1. Interacts with IPN2 and RAD1. Expressed in roots, shoots and leaves.

The protein resides in the nucleus membrane. It localises to the endoplasmic reticulum. Functionally, transcriptional regulator essential for Nod-factor-induced gene expression. Acts downstream of calcium spiking and DMI3, a calcium/calmodulin-dependent protein kinase (CCaMK). Transcription factor involved in the control of strigolactone biosynthesis in roots through the activation of the beta-carotene isomerase D27, which participates in a pathway leading to biosynthesis of strigolactones. The chain is Protein NODULATION SIGNALING PATHWAY 2 from Medicago truncatula (Barrel medic).